We begin with the raw amino-acid sequence, 167 residues long: Periplasmic nitrate reductase, electron transfer subunit (167 aa).

Positions methionine 1–alanine 34 are cleaved as a signal peptide. The tract at residues glycine 40–arginine 65 is disordered. Histidine 79, cysteine 93, cysteine 96, histidine 97, histidine 114, cysteine 133, cysteine 136, and histidine 137 together coordinate heme c.

This sequence belongs to the NapB family. Component of the periplasmic nitrate reductase NapAB complex composed of NapA and NapB. Post-translationally, binds 2 heme C groups per subunit.

Its subcellular location is the periplasm. In terms of biological role, electron transfer subunit of the periplasmic nitrate reductase complex NapAB. Receives electrons from the membrane-anchored tetraheme c-type NapC protein and transfers these to NapA subunit, thus allowing electron flow between membrane and periplasm. Essential for periplasmic nitrate reduction with nitrate as the terminal electron acceptor. The sequence is that of Periplasmic nitrate reductase, electron transfer subunit from Bradyrhizobium japonicum.